The following is a 143-amino-acid chain: Type II secretion system core protein G (143 aa).

A propeptide spans 1–8 (MQKRRQSG) (leader sequence). The residue at position 9 (phenylalanine 9) is an N-methylphenylalanine. A helical transmembrane segment spans residues 9-29 (FTLLEVMVVIVILGILASLVV). A disordered region spans residues 70–92 (QGLDALVNKPTAAPEPRSYRDGG).

The protein belongs to the GSP G family. In terms of assembly, type II secretion system is composed of four main components: the outer membrane complex, the inner membrane complex, the cytoplasmic secretion ATPase and the periplasm-spanning pseudopilus. Forms homomultimers. Post-translationally, cleaved by the prepilin peptidase. Methylated by prepilin peptidase at the amino group of the N-terminal phenylalanine once the leader sequence is cleaved.

The protein resides in the cell inner membrane. In terms of biological role, core component of the type II secretion system required for the energy-dependent secretion of extracellular factors such as proteases and toxins from the periplasm. Pseudopilin (pilin-like) protein that polymerizes to form the pseudopilus. Further polymerization triggers pseudopilus growth. In Aeromonas hydrophila, this protein is Type II secretion system core protein G (exeG).